The primary structure comprises 357 residues: Nicotinate-nucleotide--dimethylbenzimidazole phosphoribosyltransferase (357 aa).

Catalysis depends on glutamate 317, which acts as the Proton acceptor.

This sequence belongs to the CobT family.

The catalysed reaction is 5,6-dimethylbenzimidazole + nicotinate beta-D-ribonucleotide = alpha-ribazole 5'-phosphate + nicotinate + H(+). Its pathway is nucleoside biosynthesis; alpha-ribazole biosynthesis; alpha-ribazole from 5,6-dimethylbenzimidazole: step 1/2. Its function is as follows. Catalyzes the synthesis of alpha-ribazole-5'-phosphate from nicotinate mononucleotide (NAMN) and 5,6-dimethylbenzimidazole (DMB). In Halalkalibacterium halodurans (strain ATCC BAA-125 / DSM 18197 / FERM 7344 / JCM 9153 / C-125) (Bacillus halodurans), this protein is Nicotinate-nucleotide--dimethylbenzimidazole phosphoribosyltransferase.